The sequence spans 62 residues: Large ribosomal subunit protein bL33 (62 aa).

Belongs to the bacterial ribosomal protein bL33 family.

The polypeptide is Large ribosomal subunit protein bL33 (Bacteroides thetaiotaomicron (strain ATCC 29148 / DSM 2079 / JCM 5827 / CCUG 10774 / NCTC 10582 / VPI-5482 / E50)).